Here is a 531-residue protein sequence, read N- to C-terminus: Fatty acid--[acyl-carrier-protein] ligase MmaC (531 aa).

Position 169 (Thr169) interacts with Mg(2+). Ile218, Val308, and Ser312 together coordinate ATP. Glu313 lines the Mg(2+) pocket. Position 403 (Asp403) interacts with ATP.

It belongs to the ATP-dependent AMP-binding enzyme family. It depends on Mg(2+) as a cofactor.

It catalyses the reaction a (2E)-enoyl fatty acid + holo-[ACP] + ATP = a (2E)-enoyl-[ACP] + AMP + diphosphate. It carries out the reaction a (2E)-enoyl fatty acid + ATP + H(+) = a (2E)-2-fatty-enoyl-AMP + diphosphate. The catalysed reaction is a (2E)-2-fatty-enoyl-AMP + holo-[ACP] = a (2E)-enoyl-[ACP] + AMP + H(+). The enzyme catalyses (2E)-decenoate + holo-[ACP] + ATP = (2E)-decenoyl-[ACP] + AMP + diphosphate. It catalyses the reaction a (3R)-3-isocyanyl-fatty acid + holo-[ACP] + ATP = a (3R)-3-isocyanyl-fatty acyl-[ACP] + AMP + diphosphate. It carries out the reaction a (3R)-3-isocyanyl-fatty acid + ATP + H(+) = a (3R)-3-isocyanyl-fatty acyl-AMP + diphosphate. The catalysed reaction is a (3R)-3-isocyanyl-fatty acyl-AMP + holo-[ACP] = a (3R)-3-isocyanyl-fatty acyl-[ACP] + AMP + H(+). Its function is as follows. Acyl:acyl-carrier protein ligase involved in the biosynthesis of a unique class of isonitrile lipopeptides (INLPs) that seem to play a role in metal acquisition in M.marinum. Acts twice during the INLP pathway, catalyzing the activation of (2E)-2-decenoate as well as probably the corresponding (3R)-3-isocyanyl-fatty acid as acyl-adenylates (acyl-AMP), and then the acyl transfer to the dedicated acyl-carrier protein MmaB. The protein is Fatty acid--[acyl-carrier-protein] ligase MmaC of Mycobacterium marinum (strain ATCC BAA-535 / M).